The chain runs to 209 residues: ATP-dependent Clp protease proteolytic subunit (209 aa).

Serine 106 (nucleophile) is an active-site residue. The active site involves histidine 131.

The protein belongs to the peptidase S14 family. Fourteen ClpP subunits assemble into 2 heptameric rings which stack back to back to give a disk-like structure with a central cavity, resembling the structure of eukaryotic proteasomes.

It is found in the cytoplasm. It catalyses the reaction Hydrolysis of proteins to small peptides in the presence of ATP and magnesium. alpha-casein is the usual test substrate. In the absence of ATP, only oligopeptides shorter than five residues are hydrolyzed (such as succinyl-Leu-Tyr-|-NHMec, and Leu-Tyr-Leu-|-Tyr-Trp, in which cleavage of the -Tyr-|-Leu- and -Tyr-|-Trp bonds also occurs).. In terms of biological role, cleaves peptides in various proteins in a process that requires ATP hydrolysis. Has a chymotrypsin-like activity. Plays a major role in the degradation of misfolded proteins. The protein is ATP-dependent Clp protease proteolytic subunit of Brucella melitensis biotype 2 (strain ATCC 23457).